Reading from the N-terminus, the 139-residue chain is MYYFHLRVTLMEPNLAVFHDLKLTVINAWESLTVEMLSHYSVDYLFRLEEFAGVYSASIFLPTHKVDWTFLKRAVALLRECIWRRFECTQVPRGVASIYAVRNTWTPSANRVARHFVKRGALVGMQPCLHECTYERDAC.

This is an uncharacterized protein from Galliformes (FAdV-1).